Consider the following 188-residue polypeptide: Elongation factor P (188 aa).

At K34 the chain carries N6-(3,6-diaminohexanoyl)-5-hydroxylysine.

The protein belongs to the elongation factor P family. May be beta-lysylated on the epsilon-amino group of Lys-34 by the combined action of EpmA and EpmB, and then hydroxylated on the C5 position of the same residue by EpmC (if this protein is present). Lysylation is critical for the stimulatory effect of EF-P on peptide-bond formation. The lysylation moiety may extend toward the peptidyltransferase center and stabilize the terminal 3-CCA end of the tRNA. Hydroxylation of the C5 position on Lys-34 may allow additional potential stabilizing hydrogen-bond interactions with the P-tRNA.

It is found in the cytoplasm. It functions in the pathway protein biosynthesis; polypeptide chain elongation. Involved in peptide bond synthesis. Alleviates ribosome stalling that occurs when 3 or more consecutive Pro residues or the sequence PPG is present in a protein, possibly by augmenting the peptidyl transferase activity of the ribosome. Modification of Lys-34 is required for alleviation. In Yersinia pseudotuberculosis serotype O:1b (strain IP 31758), this protein is Elongation factor P.